Here is a 247-residue protein sequence, read N- to C-terminus: Acetoacetate decarboxylase (247 aa).

The active-site Schiff-base intermediate with acetoacetate is lysine 116.

The protein belongs to the ADC family.

It carries out the reaction acetoacetate + H(+) = acetone + CO2. Functionally, catalyzes the conversion of acetoacetate to acetone and carbon dioxide. The protein is Acetoacetate decarboxylase of Ralstonia nicotianae (strain ATCC BAA-1114 / GMI1000) (Ralstonia solanacearum).